Consider the following 244-residue polypeptide: MSLVLLPAVDVVNGEAVRLVQGEAGSETGYGSPRDAALAWQNDGAEWVHIVDLDAAFGRGSNRELLADVVGELDVQVELSGGIRDDASLEAALATGCGRVNLGTAAIENPEWCARAIAKYGEKIAVGLDVRLVDGEYQLRGRGWVTEGGNLWETLARLDKDGCSRYVVTDVSKDGTLTGPNLELLAQVCAATDAPVVASGGVSTIDDLRAIAGLVDRGVEGSIVGKALYAGRFTLPEALAAVSG.

The Proton acceptor role is filled by D10. Residue D129 is the Proton donor of the active site.

The protein belongs to the HisA/HisF family.

The protein resides in the cytoplasm. It catalyses the reaction 1-(5-phospho-beta-D-ribosyl)-5-[(5-phospho-beta-D-ribosylamino)methylideneamino]imidazole-4-carboxamide = 5-[(5-phospho-1-deoxy-D-ribulos-1-ylimino)methylamino]-1-(5-phospho-beta-D-ribosyl)imidazole-4-carboxamide. It functions in the pathway amino-acid biosynthesis; L-histidine biosynthesis; L-histidine from 5-phospho-alpha-D-ribose 1-diphosphate: step 4/9. This Rhodococcus opacus (strain B4) protein is 1-(5-phosphoribosyl)-5-[(5-phosphoribosylamino)methylideneamino] imidazole-4-carboxamide isomerase.